We begin with the raw amino-acid sequence, 474 residues long: tRNA-2-methylthio-N(6)-dimethylallyladenosine synthase (474 aa).

Positions 3–120 (KKLLIKTWGC…LPEMIKQSQS (118 aa)) constitute an MTTase N-terminal domain. Residues C12, C49, C83, C157, C161, and C164 each coordinate [4Fe-4S] cluster. Positions 143–375 (RAEGATAFVS…QQQINAQAMR (233 aa)) constitute a Radical SAM core domain. Positions 378-441 (RLMLGTEQRV…ANSLRGEIVR (64 aa)) constitute a TRAM domain.

This sequence belongs to the methylthiotransferase family. MiaB subfamily. Monomer. The cofactor is [4Fe-4S] cluster.

The protein resides in the cytoplasm. The catalysed reaction is N(6)-dimethylallyladenosine(37) in tRNA + (sulfur carrier)-SH + AH2 + 2 S-adenosyl-L-methionine = 2-methylsulfanyl-N(6)-dimethylallyladenosine(37) in tRNA + (sulfur carrier)-H + 5'-deoxyadenosine + L-methionine + A + S-adenosyl-L-homocysteine + 2 H(+). Its function is as follows. Catalyzes the methylthiolation of N6-(dimethylallyl)adenosine (i(6)A), leading to the formation of 2-methylthio-N6-(dimethylallyl)adenosine (ms(2)i(6)A) at position 37 in tRNAs that read codons beginning with uridine. This chain is tRNA-2-methylthio-N(6)-dimethylallyladenosine synthase, found in Vibrio vulnificus (strain YJ016).